We begin with the raw amino-acid sequence, 484 residues long: Coronin-1B (484 aa).

Ser2 carries the phosphoserine modification. WD repeat units lie at residues 80 to 120 (GHTG…LTSP), 130 to 170 (GHTK…ELYR), 174 to 213 (LHPD…LVAE), 217 to 260 (AHEG…EPMA), and 265 to 305 (DSSN…PYIH). The segment at 404–446 (LKVSRRNVLSDSRPASYSRSGASTATAVTDVPSGNLAGAGEAG) is disordered. The segment covering 410–430 (NVLSDSRPASYSRSGASTATA) has biased composition (polar residues). Residues 444–482 (EAGKLEEVMQELRALRMLVKEQGERISRLEEQLGRMENG) adopt a coiled-coil conformation.

This sequence belongs to the WD repeat coronin family. Forms homooligomers, but does not form complexes with the other coronins. Interacts with Arp2/3 complex components, including ACTR2, ARPC1B and ARPC2. Binds actin. Phosphorylation on Ser-2 regulates the interaction with the Arp2/3 complex and cell motility in fibroblasts. Phosphorylation does not seem to affect subcellular location. Ubiquitous.

It localises to the cytoplasm. The protein resides in the cytoskeleton. The protein localises to the stress fiber. Functionally, regulates leading edge dynamics and cell motility in fibroblasts. May be involved in cytokinesis and signal transduction. This is Coronin-1B (Coro1b) from Mus musculus (Mouse).